Here is a 294-residue protein sequence, read N- to C-terminus: MEGVIVPLVTPFREDYSIDFEALEWHIRFLEEKGVHGIFVNSTTGEFTSLNTDERKMLAEKGREITSGMYLVGTGSTSTLEVIELSRHAEDIGADGIVIVAPYYCKLKDEEILKHFSMVAERVDIPIIVYAIPSCANPVPVDIIRKVSLEYSNIIGVKASVDSLTYLQELIEVKEERKDFRVFTGLDQYFLSTLLLGGDGGIMACANFAPEIHLQIWNSFKRRNFEEAIKLSRVLGEISRIYNVASSFASAVKLAMIAKGFPIKPVLRPPHVIDGEEVFNEIKGILRSLENVKP.

Active-site charge relay system residues include T43 and Y104. The active-site Proton donor is Y130. The Schiff-base intermediate with substrate role is filled by K158.

The protein belongs to the DapA family. In terms of assembly, homotetramer.

It localises to the cytoplasm. This is an uncharacterized protein from Pyrococcus abyssi (strain GE5 / Orsay).